Here is a 161-residue protein sequence, read N- to C-terminus: Interleukin-17F (161 aa).

The first 28 residues, 1–28 (MKGSCETTMVKSLLLLMLGFAIISSGAA), serve as a signal peptide directing secretion. Asparagine 83 carries an N-linked (GlcNAc...) asparagine glycan. 2 disulfide bridges follow: cysteine 100–cysteine 150 and cysteine 105–cysteine 152.

The protein belongs to the IL-17 family. Homodimer; disulfide-linked. Heterodimer with IL17A (IL17A-IL17F). Forms complexes with IL17RA and IL17RC receptors with 2:1 binding stoichiometry: two receptor chains for one interleukin molecule. IL17F homodimer forms predominantly complexes with IL17RC homodimer, whereas IL17A-IL17F favors complexes with IL17RA-IL17RC. IL17RA and IL17RC chains cannot distinguish between IL17A and IL17F molecules, potentially enabling the formation of topologically distinct complexes.

The protein resides in the secreted. Functionally, effector cytokine of innate and adaptive immune system involved in antimicrobial host defense and maintenance of tissue integrity. IL17A-IL17F signals via IL17RA-IL17RC heterodimeric receptor complex, triggering homotypic interaction of IL17RA and IL17RC chains with TRAF3IP2 adapter through SEFIR domains. This leads to downstream TRAF6-mediated activation of NF-kappa-B and MAPkinase pathways ultimately resulting in transcriptional activation of cytokines, chemokines, antimicrobial peptides and matrix metalloproteinases, with potential strong immune inflammation. IL17A-IL17F is primarily involved in host defense against extracellular bacteria and fungi by inducing neutrophilic inflammation. As signature effector cytokine of T-helper 17 cells (Th17), primarily induces neutrophil activation and recruitment at infection and inflammatory sites. Stimulates the production of antimicrobial beta-defensins DEFB1, DEFB103A, and DEFB104A by mucosal epithelial cells, limiting the entry of microbes through the epithelial barriers. IL17F homodimer can signal via IL17RC homodimeric receptor complex, triggering downstream activation of TRAF6 and NF-kappa-B signaling pathway. Via IL17RC induces transcriptional activation of IL33, a potent cytokine that stimulates group 2 innate lymphoid cells and adaptive T-helper 2 cells involved in pulmonary allergic response to fungi. Likely via IL17RC, promotes sympathetic innervation of peripheral organs by coordinating the communication between gamma-delta T cells and parenchymal cells. Stimulates sympathetic innervation of thermogenic adipose tissue by driving TGFB1 expression. Regulates the composition of intestinal microbiota and immune tolerance by inducing antimicrobial proteins that specifically control the growth of commensal Firmicutes and Bacteroidetes. This chain is Interleukin-17F (Il17f), found in Rattus norvegicus (Rat).